The primary structure comprises 211 residues: MDSNSWINCPPVFSSSPSSRRYQSRSDLYLGDVEGEDDLKAEFMCPFCADEFDIVGLCCHIDVNHPVEAKNGVCPVCTKKVGLDIVGHITTQHGNVFKVQRRRRLRKGGYSSTYLTLKKELREANLQSLGGSSTFIPSSNIDSDPLLSSFMFKPPSAIPITEGDSVAQVSPKDTSKSKIQQESFSNEDQEKAKKSKFVRGLLWSTMLEDKF.

Thr113 is modified (phosphothreonine). A disordered region spans residues 163-194 (GDSVAQVSPKDTSKSKIQQESFSNEDQEKAKK). The span at 167-186 (AQVSPKDTSKSKIQQESFSN) shows a compositional bias: polar residues.

It belongs to the Di19 family. Not phosphorylated in vitro by CPK3 or CPK11. As to expression, expressed in seedlings, roots, leaves, stems, flowers and siliques.

The protein localises to the nucleus. In terms of biological role, involved in both red and blue light signaling. This chain is Protein DEHYDRATION-INDUCED 19 homolog 7 (DI19-7), found in Arabidopsis thaliana (Mouse-ear cress).